A 30-amino-acid polypeptide reads, in one-letter code: Beta/omega-theraphotoxin-Tp2a (30 aa).

Cystine bridges form between C2-C16, C9-C21, and C15-C25. The tract at residues 26–30 is flexible tail region important for ability to inhibit Nav channel; it reads KKKLW. The tract at residues 29–30 is hydrophobic dyad that anchors the toxin into the membrane while positioning it over the S3 helix of Nav1.7/SCN9A; sequence LW.

Belongs to the neurotoxin 30 (phrixotoxin) family. As to expression, expressed by the venom gland.

It localises to the secreted. In terms of biological role, gating-modifier toxin that targets voltage-gated sodium channels with a selective activity on Nav1.7/SCN9A (IC(50)=1-1.5 nM). It inhibits both activation and inactivation. For inhibition of activation, it is 100-fold more selective for Nav1.7/SCN9A (IC(50)=0.26-3) than for other sodium channels (Nav1.2/SCN2A (IC(50)=40-540 nM), Nav1.3/SCN3A (IC(50)=102 nM), Nav1.4/SCN4A (IC(50)=30-39 nM), Nav1.5/SCN5A (IC(50)=19-90 nM), Nav1.6/SCN8A (IC(50)=26 nM), and Nav1.8/SCN10A (IC(50)=146 nM)). For inhibition of inactivation, it is 20-fold more potent in inhibiting inactivation on Nav1.7/SCN9A (IC(50)=250 nM) than other channels (about 4.6 uM for all channels). It also weakly inhibits Cav1.2/CACNA1C and Cav3.2/CACNA1H (29% block at 1 uM). It inhibits Nav1.7/SCN9A activation by interacting with DII and impairs Nav1.7/SCN9A inactivation by interacting with DIV. It docks on top of the DII S3 helix Nav1.7/SCN9A. It is about 60-fold less active on Nav1.7/SCN9A at depolarized potential (0 mV; IC(50)=15 nM), compared to -120 mV potential (IC(50)=0.26 nM). This toxin binds to lipid membrane. This ability correlates with hNav1.7/SCN9A inhibition, showing that membrane binding is the first step in the inhibitory mechanism of this toxin. It inhibits Nav1.2/SCN2A less potently when it is coexpressed with SCN2B or SCN4B than when it is expressed alone, showing that beta subunits (SCN2B and SCN4B) have a protective effect. The polypeptide is Beta/omega-theraphotoxin-Tp2a (Thrixopelma pruriens (Peruvian green velvet tarantula)).